We begin with the raw amino-acid sequence, 369 residues long: Putative 2-aminoethylphosphonate import ATP-binding protein PhnT (369 aa).

Positions 19–250 constitute an ABC transporter domain; that stretch reads IVLDSLRVAY…PPNRFAAEFL (232 aa). Position 51–58 (51–58) interacts with ATP; that stretch reads GPSGSGKT.

It belongs to the ABC transporter superfamily. 2-aminoethylphosphonate importer (TC 3.A.1.11.5) family.

Its subcellular location is the cell inner membrane. In terms of biological role, probably part of the PhnSTUV complex (TC 3.A.1.11.5) involved in 2-aminoethylphosphonate import. Probably responsible for energy coupling to the transport system. This chain is Putative 2-aminoethylphosphonate import ATP-binding protein PhnT (phnT), found in Salmonella paratyphi A (strain ATCC 9150 / SARB42).